A 129-amino-acid polypeptide reads, in one-letter code: Histone H2A-IV (129 aa).

Positions methionine 1–alanine 22 are disordered. Serine 2 is modified (N-acetylserine). Serine 2 bears the Phosphoserine mark. Lysine 6 is subject to N6-(2-hydroxyisobutyryl)lysine. Residues lysine 6 and lysine 10 each carry the N6-acetyllysine modification. A compositionally biased stretch (basic residues) spans glutamine 7 to serine 19. N6-(2-hydroxyisobutyryl)lysine; alternate is present on lysine 10. Lysine 10 is subject to N6-lactoyllysine; alternate. Lysine 10 is modified (N6-succinyllysine). Residues lysine 14 and lysine 16 each participate in a glycyl lysine isopeptide (Lys-Gly) (interchain with G-Cter in ubiquitin) cross-link. Residue lysine 37 is modified to N6-(2-hydroxyisobutyryl)lysine; alternate. An N6-(2-hydroxyisobutyryl)lysine mark is found at lysine 75 and lysine 76. Lysine 96 is modified (N6-(2-hydroxyisobutyryl)lysine; alternate). Lysine 96 carries the post-translational modification N6-succinyllysine. Lysine 96 carries the N6-glutaryllysine; alternate modification. At lysine 100 the chain carries N6-glutaryllysine. The residue at position 105 (glutamine 105) is an N5-methylglutamine. The residue at position 119 (lysine 119) is an N6-(2-hydroxyisobutyryl)lysine; alternate. Residues lysine 119 and lysine 120 each carry the N6-glutaryllysine; alternate modification. Lysine 120 is covalently cross-linked (Glycyl lysine isopeptide (Lys-Gly) (interchain with G-Cter in ubiquitin)).

This sequence belongs to the histone H2A family. In terms of assembly, the nucleosome is a histone octamer containing two molecules each of H2A, H2B, H3 and H4 assembled in one H3-H4 heterotetramer and two H2A-H2B heterodimers. The octamer wraps approximately 147 bp of DNA. Post-translationally, monoubiquitination of Lys-120 (H2AK119Ub) gives a specific tag for epigenetic transcriptional repression. Following DNA double-strand breaks (DSBs), it is ubiquitinated through 'Lys-63' linkage of ubiquitin moieties, leading to the recruitment of repair proteins to sites of DNA damage. H2AK119Ub and ionizing radiation-induced 'Lys-63'-linked ubiquitination are distinct events. Phosphorylation on Ser-2 is enhanced during mitosis. Phosphorylation on Ser-2 directly represses transcription. In terms of processing, glutamine methylation at Gln-105 (H2AQ104me) by FBL is specifically dedicated to polymerase I. It is present at 35S ribosomal DNA locus and impairs binding of the FACT complex.

The protein resides in the nucleus. The protein localises to the chromosome. Functionally, core component of nucleosome. Nucleosomes wrap and compact DNA into chromatin, limiting DNA accessibility to the cellular machineries which require DNA as a template. Histones thereby play a central role in transcription regulation, DNA repair, DNA replication and chromosomal stability. DNA accessibility is regulated via a complex set of post-translational modifications of histones, also called histone code, and nucleosome remodeling. In Gallus gallus (Chicken), this protein is Histone H2A-IV.